The chain runs to 602 residues: Elongation factor 4 (602 aa).

The tr-type G domain occupies arginine 6–alanine 188. GTP is bound by residues aspartate 18 to threonine 23 and asparagine 135 to aspartate 138.

This sequence belongs to the TRAFAC class translation factor GTPase superfamily. Classic translation factor GTPase family. LepA subfamily.

It localises to the cell membrane. The catalysed reaction is GTP + H2O = GDP + phosphate + H(+). Its function is as follows. Required for accurate and efficient protein synthesis under certain stress conditions. May act as a fidelity factor of the translation reaction, by catalyzing a one-codon backward translocation of tRNAs on improperly translocated ribosomes. Back-translocation proceeds from a post-translocation (POST) complex to a pre-translocation (PRE) complex, thus giving elongation factor G a second chance to translocate the tRNAs correctly. Binds to ribosomes in a GTP-dependent manner. This chain is Elongation factor 4, found in Oceanobacillus iheyensis (strain DSM 14371 / CIP 107618 / JCM 11309 / KCTC 3954 / HTE831).